We begin with the raw amino-acid sequence, 940 residues long: AP-2 complex subunit alpha (940 aa).

Residues serine 632 and serine 634 each carry the phosphoserine modification. Residues 651-662 are compositionally biased toward polar residues; it reads SHSKLNNSNANT. The segment at 651 to 679 is disordered; the sequence is SHSKLNNSNANTDLLGLSTPPSNNIGSGS. The segment covering 668–679 has biased composition (low complexity); that stretch reads STPPSNNIGSGS.

It belongs to the adaptor complexes large subunit family. Adaptor protein complex 2 (AP-2) is a heterotetramer composed of two large adaptins (alpha-type and beta-type subunits), a medium adaptin (mu-type subunit AP50) and a small adaptin (sigma-type subunit AP17). In terms of tissue distribution, expressed in the Garland cells, imaginal disks, adult midgut precursors, the antenno-maxillary complex, the endoderm, the fat bodies, and the visceral mesoderm and cells of the CNS and PNS including neuroblasts, the presumptive stomatogastric nervous system, and the lateral chordotonal sense organs.

The protein localises to the cell membrane. Its subcellular location is the membrane. It is found in the coated pit. Functionally, adaptins are components of the adapter complexes which link clathrin to receptors in coated vesicles. Clathrin-associated protein complexes are believed to interact with the cytoplasmic tails of membrane proteins, leading to their selection and concentration. AP-2alpha is a subunit of the plasma membrane adapter. This is AP-2 complex subunit alpha (AP-2alpha) from Drosophila melanogaster (Fruit fly).